Here is a 331-residue protein sequence, read N- to C-terminus: MVKSILASVLFAATALAASRMTAPSGAIVVAKSGGDYDTISAAVDALSTTSTETQTIFIEEGSYDEQVYIPALSGKLIVYGQTEDTTTYTSNLVNITHAIALADVDNDDETATLRNYAEGSAIYNLNIANTCGQACHQALAVSAYASEQGYYACQFTGYQDTLLAETGYQVYAGTYIEGAVDFIFGQHARAWFHECDIRVLEGPSSASITANGRSSESDDSYYVIHKSTVAAADGNDVSSGTYYLGRPWSQYARVCFQKTSMTDVINHLGWTEWSTSTPNTENVTFVEYGNTGTGAEGPRANFSSELTEPITISWLLGSDWEDWVDTSYIN.

The first 17 residues, 1 to 17, serve as a signal peptide directing secretion; the sequence is MVKSILASVLFAATALA. Glutamine 138 provides a ligand contact to substrate. Aspartate 161 (proton donor) is an active-site residue. Catalysis depends on aspartate 182, which acts as the Nucleophile. The substrate site is built by arginine 247 and tryptophan 249.

The protein belongs to the pectinesterase family.

Its subcellular location is the secreted. The catalysed reaction is [(1-&gt;4)-alpha-D-galacturonosyl methyl ester](n) + n H2O = [(1-&gt;4)-alpha-D-galacturonosyl](n) + n methanol + n H(+). The protein operates within glycan metabolism; pectin degradation; 2-dehydro-3-deoxy-D-gluconate from pectin: step 1/5. Involved in maceration and soft-rotting of plant tissue. The protein is Pectinesterase (pme1) of Aspergillus niger.